The chain runs to 257 residues: AN1-type zinc finger protein 2B (257 aa).

2 consecutive AN1-type zinc fingers follow at residues 4–52 (PDLG…QKDI) and 94–142 (KIFT…HQTS). Zn(2+) contacts are provided by Cys10, Cys15, Cys25, Cys28, Cys33, His36, His42, Cys44, Cys100, Cys105, Cys115, Cys118, Cys123, His126, His132, and Cys134. The interval 141–151 (TSRAGLAAISR) is VCP/p97-interacting motif (VIM). Residues 152–184 (AQGLASTSTAPSPSRTLPSSSSPSRATPQLPTR) form a disordered region. The span at 155-179 (LASTSTAPSPSRTLPSSSSPSRATP) shows a compositional bias: low complexity. A phosphoserine; by MAPK14 mark is found at Ser163, Ser173, and Ser187. UIM domains lie at 197-216 (SEDE…AKPQ) and 221-240 (QEED…AEYQ). Cys254 carries the post-translational modification Cysteine methyl ester. The S-geranylgeranyl cysteine moiety is linked to residue Cys254. The CAAX motif motif lies at 254 to 257 (CSLC). A propeptide spans 255-257 (SLC) (removed in mature form).

As to quaternary structure, binds 'Lys-48'-linked polyubiquitin chains of ubiquitinated proteins. Associates with the proteasome complex; upon exposure to arsenite. Interacts (via VIM motif) with VCP; the interaction is direct. Interacts with BAG6. Interacts with IGF1R (nascent precursor form). Interacts with DERL1, FAF2, NPLOC4 and UFD1; probably through VCP. Post-translationally, phosphorylated by MAPK14. Phosphorylation has no effect on association with the proteasome complex.

The protein resides in the endoplasmic reticulum membrane. In terms of biological role, plays a role in protein homeostasis by regulating both the translocation and the ubiquitin-mediated proteasomal degradation of nascent proteins at the endoplasmic reticulum. It is involved in the regulation of signal-mediated translocation of proteins into the endoplasmic reticulum. It also plays a role in the ubiquitin-mediated proteasomal degradation of proteins for which signal-mediated translocation to the endoplasmic reticulum has failed. May therefore function in the endoplasmic reticulum stress-induced pre-emptive quality control, a mechanism that selectively attenuates the translocation of newly synthesized proteins into the endoplasmic reticulum and reroutes them to the cytosol for proteasomal degradation. By controlling the steady-state expression of the IGF1R receptor, indirectly regulates the insulin-like growth factor receptor signaling pathway. The polypeptide is AN1-type zinc finger protein 2B (Mus musculus (Mouse)).